The following is a 240-amino-acid chain: 4-hydroxy-tetrahydrodipicolinate reductase (240 aa).

7–12 (GLSGTM) is a binding site for NAD(+). NADP(+) is bound at residue Lys35. NAD(+)-binding positions include 74–76 (GTT) and 98–101 (ATNM). His131 functions as the Proton donor/acceptor in the catalytic mechanism. His132 lines the (S)-2,3,4,5-tetrahydrodipicolinate pocket. The Proton donor role is filled by Lys135. 141-142 (GS) provides a ligand contact to (S)-2,3,4,5-tetrahydrodipicolinate.

The protein belongs to the DapB family.

It is found in the cytoplasm. It catalyses the reaction (S)-2,3,4,5-tetrahydrodipicolinate + NAD(+) + H2O = (2S,4S)-4-hydroxy-2,3,4,5-tetrahydrodipicolinate + NADH + H(+). The catalysed reaction is (S)-2,3,4,5-tetrahydrodipicolinate + NADP(+) + H2O = (2S,4S)-4-hydroxy-2,3,4,5-tetrahydrodipicolinate + NADPH + H(+). Its pathway is amino-acid biosynthesis; L-lysine biosynthesis via DAP pathway; (S)-tetrahydrodipicolinate from L-aspartate: step 4/4. In terms of biological role, catalyzes the conversion of 4-hydroxy-tetrahydrodipicolinate (HTPA) to tetrahydrodipicolinate. This chain is 4-hydroxy-tetrahydrodipicolinate reductase, found in Alkaliphilus metalliredigens (strain QYMF).